Reading from the N-terminus, the 130-residue chain is Small ribosomal subunit protein uS8 (130 aa).

It belongs to the universal ribosomal protein uS8 family. Part of the 30S ribosomal subunit. Contacts proteins S5 and S12.

Its function is as follows. One of the primary rRNA binding proteins, it binds directly to 16S rRNA central domain where it helps coordinate assembly of the platform of the 30S subunit. This chain is Small ribosomal subunit protein uS8, found in Sodalis glossinidius (strain morsitans).